A 362-amino-acid polypeptide reads, in one-letter code: Protein-glutamate methylesterase/protein-glutamine glutaminase (362 aa).

A Response regulatory domain is found at 10–127 (RVLVVDDSAF…SLNMHVARDE (118 aa)). Asp61 bears the 4-aspartylphosphate mark. One can recognise a CheB-type methylesterase domain in the interval 173 to 362 (RLPRRLVLIG…DAITRAVGEG (190 aa)). Residues Ser184, His211, and Asp304 contribute to the active site.

It belongs to the CheB family. Post-translationally, phosphorylated by CheA. Phosphorylation of the N-terminal regulatory domain activates the methylesterase activity.

It is found in the cytoplasm. The enzyme catalyses [protein]-L-glutamate 5-O-methyl ester + H2O = L-glutamyl-[protein] + methanol + H(+). It carries out the reaction L-glutaminyl-[protein] + H2O = L-glutamyl-[protein] + NH4(+). In terms of biological role, involved in chemotaxis. Part of a chemotaxis signal transduction system that modulates chemotaxis in response to various stimuli. Catalyzes the demethylation of specific methylglutamate residues introduced into the chemoreceptors (methyl-accepting chemotaxis proteins or MCP) by CheR. Also mediates the irreversible deamidation of specific glutamine residues to glutamic acid. This chain is Protein-glutamate methylesterase/protein-glutamine glutaminase, found in Symbiobacterium thermophilum (strain DSM 24528 / JCM 14929 / IAM 14863 / T).